Reading from the N-terminus, the 426-residue chain is O-methyltransferase pyvH (426 aa).

S-adenosyl-L-methionine is bound by residues 258–259, Asp-281, 308–309, and Arg-323; these read GG and DF. The active-site Proton acceptor is His-327.

This sequence belongs to the class I-like SAM-binding methyltransferase superfamily. Cation-independent O-methyltransferase family.

Its pathway is secondary metabolite biosynthesis. Its function is as follows. O-methyltransferase; part of the gene cluster that mediates the biosynthesis of pyranoviolin A, a pyranonigrin analog with a C-3 methoxy group. Initially, the PKS portion of pyvA synthesizes C-10 carbon chain from 5 molecules of malonyl-CoA, which is then condensed with the thiolation (T) domain-bound glycine activated by the adenylation (A) domain. The subsequent chain release by Dieckmann condensation (DKC) could be catalyzed by the TE domain present at the C-terminus of pyvA and/or the alpha/beta hydrolase pyvD, installing the tetramic acid moiety. The FAD-dependent monooxygenase pyvC next epoxidizes one of the olefins of the polyketide part, and the epoxide ring-opening induces the dihydro-gamma-pyrone ring formation. The cytochrome P450 monooxygeanse pyvB would be responsible for the 2 consecutive reactions, in which the dihydro-gamma-pyrone is oxidized to gamma-pyrone and C-7 is hydroxylated to yield pyranonigrin F. Finally, the O-methyltransferase pyvH methylates the C-3 hydroxy group to complete the biosynthesis. This Aspergillus violaceofuscus (strain CBS 115571) protein is O-methyltransferase pyvH.